Reading from the N-terminus, the 341-residue chain is Anthranilate phosphoribosyltransferase (341 aa).

Residues Gly-84, 94–97 (NVST), 112–120 (KHGGRAASS), and Ser-124 each bind 5-phospho-alpha-D-ribose 1-diphosphate. Gly-84 contributes to the anthranilate binding site. Ser-96 serves as a coordination point for Mg(2+). Residue Arg-170 coordinates anthranilate. Positions 229 and 230 each coordinate Mg(2+).

This sequence belongs to the anthranilate phosphoribosyltransferase family. Homodimer. Requires Mg(2+) as cofactor.

It carries out the reaction N-(5-phospho-beta-D-ribosyl)anthranilate + diphosphate = 5-phospho-alpha-D-ribose 1-diphosphate + anthranilate. Its pathway is amino-acid biosynthesis; L-tryptophan biosynthesis; L-tryptophan from chorismate: step 2/5. Catalyzes the transfer of the phosphoribosyl group of 5-phosphorylribose-1-pyrophosphate (PRPP) to anthranilate to yield N-(5'-phosphoribosyl)-anthranilate (PRA). In Methylobacillus flagellatus (strain ATCC 51484 / DSM 6875 / VKM B-1610 / KT), this protein is Anthranilate phosphoribosyltransferase.